Reading from the N-terminus, the 1139-residue chain is GRIP and coiled-coil domain-containing protein (1139 aa).

The disordered stretch occupies residues 366–388 (NDDSQINNNVSNKVNSPDDDPNT). Over residues 369–380 (SQINNNVSNKVN) the composition is skewed to polar residues. Coiled coils occupy residues 472–648 (VTKL…INNE) and 758–877 (LYIL…ETQQ). The disordered stretch occupies residues 1004 to 1024 (NEQENDNNNNNNNNNNNNNVE). Over residues 1009 to 1022 (DNNNNNNNNNNNNN) the composition is skewed to low complexity. Residues 1043-1084 (YKKIRKKLETYEILLNEQQEGKKKMTEEINSLKNQVKNYESI) adopt a coiled-coil conformation. The 52-residue stretch at 1084–1135 (INGNYQHIIYQKNILSNFIAQIPSRIQVDDYVSVIFNSFNFSNQEIEAINIK) folds into the GRIP domain.

This Plasmodium falciparum (isolate 3D7) protein is GRIP and coiled-coil domain-containing protein.